Consider the following 373-residue polypeptide: RNA 3'-terminal phosphate cyclase-like protein (373 aa).

This sequence belongs to the RNA 3'-terminal cyclase family. Type 2 subfamily. As to quaternary structure, part of the small subunit (SSU) processome, composed of more than 70 proteins and the RNA chaperone small nucleolar RNA (snoRNA) U3. Interacts with BMS1.

Its subcellular location is the nucleus. It localises to the nucleolus. In terms of biological role, as part of the small subunit (SSU) processome, it plays a role in 40S-ribosomal-subunit biogenesis in the early pre-rRNA processing steps at sites A0, A1 and A2 that are required for proper maturation of the 18S RNA. Activates BMS1 by promoting GDP/GTP exchange. Does not have cyclase activity. This Homo sapiens (Human) protein is RNA 3'-terminal phosphate cyclase-like protein.